Reading from the N-terminus, the 755-residue chain is Serine/threonine-protein kinase GA29083 (755 aa).

Low complexity predominate over residues 18–52 (QASASGSGTPKKTAASSAAAQNSKQLLDQLSQQQK). The disordered stretch occupies residues 18 to 128 (QASASGSGTP…GSANTNGSAS (111 aa)). Composition is skewed to basic and acidic residues over residues 53–66 (AQEE…RDCD) and 74–84 (EPEKDLDELRD). Residues 87-99 (GSLTGSGSVGKSN) show a composition bias toward polar residues. Residues 100-128 (GSLSGASSTTSAPAGTSTPGSANTNGSAS) are compositionally biased toward low complexity. 2 Doublecortin domains span residues 157-243 (HRIK…VDYN) and 314-397 (RIVT…VEDF). In terms of domain architecture, Protein kinase spans 484–742 (YTLSQIIGDG…SEDILDHYWT (259 aa)). ATP contacts are provided by residues 490–498 (IGDGNFAIV) and Lys-513. Catalysis depends on Asp-605, which acts as the Proton acceptor.

This sequence belongs to the protein kinase superfamily. CAMK Ser/Thr protein kinase family. CaMK subfamily.

It carries out the reaction L-seryl-[protein] + ATP = O-phospho-L-seryl-[protein] + ADP + H(+). The catalysed reaction is L-threonyl-[protein] + ATP = O-phospho-L-threonyl-[protein] + ADP + H(+). The protein is Serine/threonine-protein kinase GA29083 of Drosophila pseudoobscura pseudoobscura (Fruit fly).